A 267-amino-acid chain; its full sequence is 7alpha-hydroxysteroid dehydrogenase (267 aa).

Residues 13-18, R38, 63-64, and N90 each bind NADP(+); these read SATRGI and DA. S145 and Y158 together coordinate cholate. NADP(+)-binding positions include Y158, K162, and 191-195; that span reads IATDA. Y158 acts as the Proton acceptor in catalysis.

It belongs to the short-chain dehydrogenases/reductases (SDR) family. As to quaternary structure, homotetramer.

It catalyses the reaction cholate + NADP(+) = 3alpha,12alpha-dihydroxy-7-oxo-5beta-cholanate + NADPH + H(+). It carries out the reaction chenodeoxycholate + NADP(+) = 7-oxolithocholate + NADPH + H(+). Functionally, 7alpha-hydroxysteroid dehydrogenase that catalyzes the NADP(+)-dependent oxidation of the 7alpha-hydroxy group of 7alpha-hydroxysteroids, such as the major human bile acids cholate and chenodeoxycholate, to the corresponding 7-oxosteroids. Is thus liley involved in the metabolism of primary bile acids. This is 7alpha-hydroxysteroid dehydrogenase from Paraclostridium sordellii (Clostridium sordellii).